The sequence spans 444 residues: Proline--tRNA ligase (444 aa).

It belongs to the class-II aminoacyl-tRNA synthetase family. ProS type 2 subfamily. As to quaternary structure, homodimer.

The protein resides in the cytoplasm. The catalysed reaction is tRNA(Pro) + L-proline + ATP = L-prolyl-tRNA(Pro) + AMP + diphosphate. Functionally, catalyzes the attachment of proline to tRNA(Pro) in a two-step reaction: proline is first activated by ATP to form Pro-AMP and then transferred to the acceptor end of tRNA(Pro). This Maricaulis maris (strain MCS10) (Caulobacter maris) protein is Proline--tRNA ligase.